Here is a 222-residue protein sequence, read N- to C-terminus: MADS-box transcription factor 26 (222 aa).

One can recognise an MADS-box domain in the interval 1–61 (MARGKVQLRR…GKLYDLATTG (61 aa)). One can recognise a K-box domain in the interval 85–176 (RMDPKQEAMV…QEKIVEQNGL (92 aa)).

It is found in the nucleus. Probable transcription factor. In Oryza sativa subsp. indica (Rice), this protein is MADS-box transcription factor 26 (MADS26).